The following is a 103-amino-acid chain: Large ribosomal subunit protein bL21 (103 aa).

It belongs to the bacterial ribosomal protein bL21 family. In terms of assembly, part of the 50S ribosomal subunit. Contacts protein L20.

This protein binds to 23S rRNA in the presence of protein L20. The protein is Large ribosomal subunit protein bL21 of Erwinia tasmaniensis (strain DSM 17950 / CFBP 7177 / CIP 109463 / NCPPB 4357 / Et1/99).